A 200-amino-acid polypeptide reads, in one-letter code: Recoverin (200 aa).

A lipid anchor (N-myristoyl glycine) is attached at Gly-2. EF-hand domains follow at residues Glu-25–Thr-60, Asp-61–Gly-96, Lys-97–Met-132, and Thr-147–Ile-182. At Cys-39 the chain carries Cysteine sulfenic acid (-SOH). 10 residues coordinate Ca(2+): Asp-74, Asn-76, Asp-78, Thr-80, Glu-85, Asp-110, Asp-112, Asn-114, Thr-116, and Glu-121. An interaction with GRK1 region spans residues Glu-189 to Lys-192.

It belongs to the recoverin family. In terms of assembly, homodimer; disulfide-linked. Homodimerization is caused by prolonged intense illumination. May form a complex composed of RHO, GRK1 and RCVRN in a Ca(2+)-dependent manner; RCVRN prevents the interaction between GRK1 and RHO. Interacts (via C-terminus) with GRK1 (via N-terminus); the interaction is Ca(2+)-dependent. The N-terminal glycine is linked to one of four different types of acyl groups. The most abundant is myristoleate (14:1), but 14:0, 14:2, and 12:0 acyl residues are also present. The Ca(2+) induced exposure of the myristoyl group, known as the calcium-myristoyl switch, promotes RCVRN binding to the photoreceptor cell membranes only when intracellular Ca(2+) concentration is high. Post-translationally, oxidation on Cys-39 occurs in response to prolonged intense illumination and results in the formation of disulfide homodimers, and to a lesser extent disulfide-linked heterodimers. Retina and pineal gland.

It localises to the photoreceptor inner segment. The protein resides in the cell projection. It is found in the cilium. Its subcellular location is the photoreceptor outer segment. The protein localises to the photoreceptor outer segment membrane. It localises to the perikaryon. Acts as a calcium sensor and regulates phototransduction of cone and rod photoreceptor cells. Modulates light sensitivity of cone photoreceptor in dark and dim conditions. In response to high Ca(2+) levels induced by low light levels, prolongs RHO/rhodopsin activation in rod photoreceptor cells by binding to and inhibiting GRK1-mediated phosphorylation of RHO/rhodopsin. Plays a role in scotopic vision/enhances vision in dim light by enhancing signal transfer between rod photoreceptors and rod bipolar cells. Improves rod photoreceptor sensitivity in dim light and mediates response of rod photoreceptors to facilitate detection of change and motion in bright light. The polypeptide is Recoverin (RCVRN) (Homo sapiens (Human)).